Here is a 355-residue protein sequence, read N- to C-terminus: MNSTTKENKETIRPVFPFTAIVGQEEMKLALILNVIDPKIGGVMIMGDRGTGKSTTIRAIADLLPKIEVVKDDLFNSHPMDVDLMSDENKKTLQDGVALTTSYINVPMVDLPLGATEDRVCGTIDIEKALTEGIKTFEPGLLAKANRGILYVDEVNLLDDHLVDILLDSAASGWNTVEREGISVRHPARFVLVGSGNPEEGELRPQLLDRFGMHAEIRTVKDPELRVKIVEQRTNFDQNPRRCIEDCQKTQNDLKEKIAEAQLLLSNITIDYDLRIKISQVCGELDVDGLRGDIVTNRAAKAYAAFNGQQNVKSSDIGKVITLCLRHRLRKDPLEAMDSGEKVQKVFNKIFEEEN.

Residue 47–54 (GDRGTGKS) participates in ATP binding.

The protein belongs to the Mg-chelatase subunits D/I family.

The protein resides in the plastid. Its subcellular location is the chloroplast. The catalysed reaction is protoporphyrin IX + Mg(2+) + ATP + H2O = Mg-protoporphyrin IX + ADP + phosphate + 3 H(+). It functions in the pathway porphyrin-containing compound metabolism; chlorophyll biosynthesis. Involved in chlorophyll biosynthesis; introduces a magnesium ion into protoporphyrin IX to yield Mg-protoporphyrin IX. This is Magnesium-chelatase subunit ChlI (chlI) from Pyropia yezoensis (Susabi-nori).